Here is a 1263-residue protein sequence, read N- to C-terminus: MSDYESGSDIDNYYEADEFDDFIEYSDNEVEQEKSKPTPGQIEVEEIEEPEEDRIRTLTTTLKPNETQAQKLLKAHISVLVSALGGPDHTSDIQPPPYKLGHDALACLKDIKRWIRAVDEKKNNYEVALACAESGLVTNDLIVIMCQWEDKMQKKEIIKNKTTTEKTMLACLELLVLLTWPVEFGKDLSESQKLLYSEIKKVHVSYKKQILMFNNGQLLKAAIRLVLPTIAKSRIDREPRDNQILKLVLYLIRNLLAIEPANLSISNKSRKGASVTASDLPLGVTQDDISINNVLSVFKKNKVLMLLLTISGSLGTEFDRDMFGEICLESIYLIIKGLSASEVLVKKNLGSTPVAAPSQNTVPDAINASQPLQPVTTTVGMQLQDLLATESKKKKIQTQNIASRHGRFGSLLSIRSADSNSFVVSGQEALINTDSSLAKLDKSKKWKDRTYFKYDSDEYVNTSTPVYLNLTGQDILYNFVEQFLSGGCFNNLIECMGSRLTSQTDLNMVDELTLASYFFTISWFLSYQRERIGLDSENKELNYGSVGAALSEVNFILIIGYFRDSFSVKKWNSLHVAMICFKELLQISNSVFGKEITNQTGEGDEISQHEIDRELAEGIIRKLFSFNDFLSIIVQIPQTAAKHSPDYLRVSVSVVHILLKAFETFANEDVHLYIQSKRKQSKRNRKRVNNLDKSTEDRLRDVIYASDEELDQSSAKEITQERKLDFKKTEARFFHQAIVSTYINYLSRYEDLSNQEIKTCLSYFHRLFVVRKDFTGLYRLDFMQLLQKLRNYLQRGSSLRLQVEEFIYYFMKKFKTAFERFPMPIEVLFPRFEDNECKVYLATGEVYEKEETTSTSRSPRLAKDLEFVRDFGLDDQIKILVSQLHVQEKQSLLKWLIQELERIINDRILNSDSIAELNASNQQRRLFINNGYLRFLLRIIGFDLPYTMEEVPELATTVDMEHLTKVTELIKKWDSSQPVIFEDDKVPSYFVRTREAGYDEDQYNENDQEYDFNDDSIAFETEANPNSNRNHVSELDHLEELERQLSSNGSRVNSKERNGTKGKARKKSKEKKRPEPKKVRGLKRRRIPKDLLDDDDSQHVVKSAEFVHDSDDESDDEKDKAFFEREEKMRNLLNDMGGIATSEQLKEIQKVWKNLETGGNNKVASTVAKAVKEVGLFVEESDNDDEVEEESRNSAPVNEEADRTIFESGEVDTQQDLSDNTSNTSDMESETETTKRSFVEDPEEISHVQPKRKRLVISDDEEE.

Disordered regions lie at residues 1042-1098 and 1178-1263; these read ERQL…DDSQ and VEES…DEEE. Positions 1060–1071 are enriched in basic residues; that stretch reads TKGKARKKSKEK. Acidic residues predominate over residues 1179 to 1189; the sequence is EESDNDDEVEE. Residues 1211–1226 show a composition bias toward polar residues; sequence VDTQQDLSDNTSNTSD.

This sequence belongs to the timeless family. As to quaternary structure, component of the fork protection complex (FPC) consisting of TOF1 and CSM3.

The protein resides in the nucleus. Its function is as follows. Forms a fork protection complex (FPC) with CSM3 and which is required for chromosome segregation during meiosis and DNA damage repair. FPC coordinates leading and lagging strand synthesis and moves with the replication fork. FPC stabilizes replication forks in a configuration that is recognized by replication checkpoint sensors. The protein is Topoisomerase 1-associated factor 1 (YBL053) of Candida albicans (strain SC5314 / ATCC MYA-2876) (Yeast).